The chain runs to 304 residues: N-acetylmuramic acid 6-phosphate etherase 1 (304 aa).

The segment covering 1-10 (MENSHLGSLT) has biased composition (polar residues). The segment at 1-20 (MENSHLGSLTTERRNERSKR) is disordered. The 164-residue stretch at 58-221 (AVGSLKKGGR…STAAMIKMGK (164 aa)) folds into the SIS domain. Residue Glu-86 is the Proton donor of the active site. The active site involves Glu-117.

This sequence belongs to the GCKR-like family. MurNAc-6-P etherase subfamily. In terms of assembly, homodimer.

The enzyme catalyses N-acetyl-D-muramate 6-phosphate + H2O = N-acetyl-D-glucosamine 6-phosphate + (R)-lactate. It functions in the pathway amino-sugar metabolism; N-acetylmuramate degradation. Its function is as follows. Specifically catalyzes the cleavage of the D-lactyl ether substituent of MurNAc 6-phosphate, producing GlcNAc 6-phosphate and D-lactate. In Bacillus licheniformis (strain ATCC 14580 / DSM 13 / JCM 2505 / CCUG 7422 / NBRC 12200 / NCIMB 9375 / NCTC 10341 / NRRL NRS-1264 / Gibson 46), this protein is N-acetylmuramic acid 6-phosphate etherase 1.